A 698-amino-acid polypeptide reads, in one-letter code: Dual trans-enoyl reductase/FAD-dependent monooxygenase tazHJ (698 aa).

NADP(+) is bound by residues 54–57, 78–81, tyrosine 96, and 279–280; these read STAT, SPRH, and IA. Residues glutamate 299, glycine 312, and arginine 372 each coordinate FAD. Residue arginine 455 is part of the active site. 2 residues coordinate FAD: aspartate 571 and alanine 584.

It in the N-terminal section; belongs to the zinc-containing alcohol dehydrogenase family. In the C-terminal section; belongs to the paxM FAD-dependent monooxygenase family.

It participates in secondary metabolite biosynthesis. Its function is as follows. Dual trans-enoyl reductase/FAD-dependent monooxygenase; part of the gene cluster that mediates the biosynthesis of azaterrilone A and other azaphilones, a class of fungal metabolites characterized by a highly oxygenated pyrano-quinone bicyclic core and exhibiting a broad range of bioactivities. The first step of the pathway begins with the non-reducing polyketide synthase tazA that assembles one acetyl-CoA starter unit, five malonyl-CoA units, and catalyzes a series of Claisen condensations, methylation, PT-mediated cyclization, and finally releases the first hexaketide precursor through the R-domain. The tazA product then undergoes reduction on its terminal ketone and the following pyran-ring formation by yet undetermined enzyme(s). Dehydration and enoyl reduction, possibly involving the trans-enoyl reductase tazE leads to the next intermediate. TazD is predicted as an acetyltransferase and might catalyze the acetylation steps leading to the synthesis of azaterrilone A. Azaterrilone A is not the final product of the taz pathway and both the highly reducing polyketide synthase tazB and the dual enzyme tazHJ catalyze late steps of the pathway, leading to the production of the 2 final stereoisomers that contain additional polyketide modification whose structures have still to be determined. This chain is Dual trans-enoyl reductase/FAD-dependent monooxygenase tazHJ, found in Aspergillus terreus (strain NIH 2624 / FGSC A1156).